A 274-amino-acid chain; its full sequence is 2,3,4,5-tetrahydropyridine-2,6-dicarboxylate N-succinyltransferase (274 aa).

2 residues coordinate substrate: Arg-104 and Asp-141.

This sequence belongs to the transferase hexapeptide repeat family. Homotrimer.

It is found in the cytoplasm. The enzyme catalyses (S)-2,3,4,5-tetrahydrodipicolinate + succinyl-CoA + H2O = (S)-2-succinylamino-6-oxoheptanedioate + CoA. It functions in the pathway amino-acid biosynthesis; L-lysine biosynthesis via DAP pathway; LL-2,6-diaminopimelate from (S)-tetrahydrodipicolinate (succinylase route): step 1/3. The sequence is that of 2,3,4,5-tetrahydropyridine-2,6-dicarboxylate N-succinyltransferase from Escherichia coli O139:H28 (strain E24377A / ETEC).